The following is an 811-amino-acid chain: Elongation factor G, mitochondrial (811 aa).

A mitochondrion-targeting transit peptide spans 1-64; the sequence is MSAIARAAAR…FQQSFQRRWA (64 aa). Residues 96–394 form the tr-type G domain; it reads RRQRNVGISA…GVCAYLPNPS (299 aa). GTP contacts are provided by residues 105 to 112, 192 to 196, and 246 to 249; these read AHIDSGKT, DTPGH, and NKMD.

This sequence belongs to the TRAFAC class translation factor GTPase superfamily. Classic translation factor GTPase family. EF-G/EF-2 subfamily.

The protein resides in the mitochondrion. It participates in protein biosynthesis; polypeptide chain elongation. In terms of biological role, mitochondrial GTPase that catalyzes the GTP-dependent ribosomal translocation step during translation elongation. During this step, the ribosome changes from the pre-translocational (PRE) to the post-translocational (POST) state as the newly formed A-site-bound peptidyl-tRNA and P-site-bound deacylated tRNA move to the P and E sites, respectively. Catalyzes the coordinated movement of the two tRNA molecules, the mRNA and conformational changes in the ribosome. In Cryptococcus neoformans var. neoformans serotype D (strain JEC21 / ATCC MYA-565) (Filobasidiella neoformans), this protein is Elongation factor G, mitochondrial.